The sequence spans 215 residues: Redox-sensing transcriptional repressor Rex 2 (215 aa).

Positions Val-15–Val-54 form a DNA-binding region, H-T-H motif. Gly-89 to Gly-94 serves as a coordination point for NAD(+).

It belongs to the transcriptional regulatory Rex family. Homodimer.

The protein resides in the cytoplasm. Its function is as follows. Modulates transcription in response to changes in cellular NADH/NAD(+) redox state. In Enterococcus faecalis (strain ATCC 700802 / V583), this protein is Redox-sensing transcriptional repressor Rex 2.